The sequence spans 75 residues: Large ribosomal subunit protein bL28 (75 aa).

It belongs to the bacterial ribosomal protein bL28 family.

The sequence is that of Large ribosomal subunit protein bL28 from Baumannia cicadellinicola subsp. Homalodisca coagulata.